The chain runs to 159 residues: Ribosomal RNA large subunit methyltransferase H (159 aa).

Residues leucine 76, glycine 108, and 127–132 (FSKMTF) contribute to the S-adenosyl-L-methionine site.

Belongs to the RNA methyltransferase RlmH family. As to quaternary structure, homodimer.

It localises to the cytoplasm. The enzyme catalyses pseudouridine(1915) in 23S rRNA + S-adenosyl-L-methionine = N(3)-methylpseudouridine(1915) in 23S rRNA + S-adenosyl-L-homocysteine + H(+). In terms of biological role, specifically methylates the pseudouridine at position 1915 (m3Psi1915) in 23S rRNA. The protein is Ribosomal RNA large subunit methyltransferase H of Shouchella clausii (strain KSM-K16) (Alkalihalobacillus clausii).